A 72-amino-acid polypeptide reads, in one-letter code: MVCIPCIVIPVLLWIFKKFLEPYIYPVVSRIWPRKAVQQLDNKNTGKVDCKGADTNGFSTKGPTEVSDKKKD.

The tract at residues 1–33 is necessary for its localzation to the endoplasmic reticulum and lipid droplets; sequence MVCIPCIVIPVLLWIFKKFLEPYIYPVVSRIWP. A disordered region spans residues 45–72; sequence TGKVDCKGADTNGFSTKGPTEVSDKKKD.

This sequence belongs to the UPF0729 family. In terms of assembly, interacts with DERL1 and AMFR. Post-translationally, undergoes ER-associated degradation (ERAD).

It localises to the endoplasmic reticulum. Its subcellular location is the lipid droplet. May activate the NF-kappa-B signaling pathway. This Rattus norvegicus (Rat) protein is UPF0729 protein C18orf32 homolog.